Reading from the N-terminus, the 325-residue chain is Thioredoxin reductase (325 aa).

Residues 10-13 (SGPS), 39-40 (IA), Gln44, Asn53, Val86, Cys143, Asp286, and 293-295 (RQA) each bind FAD. Cys140 and Cys143 form a disulfide bridge.

This sequence belongs to the class-II pyridine nucleotide-disulfide oxidoreductase family. In terms of assembly, homodimer. It depends on FAD as a cofactor.

The protein resides in the cytoplasm. It carries out the reaction [thioredoxin]-dithiol + NADP(+) = [thioredoxin]-disulfide + NADPH + H(+). This Pneumocystis carinii protein is Thioredoxin reductase (TRR1).